The following is a 121-amino-acid chain: ATP synthase epsilon chain (121 aa).

This sequence belongs to the ATPase epsilon chain family. In terms of assembly, F-type ATPases have 2 components, CF(1) - the catalytic core - and CF(0) - the membrane proton channel. CF(1) has five subunits: alpha(3), beta(3), gamma(1), delta(1), epsilon(1). CF(0) has three main subunits: a, b and c.

It is found in the cell membrane. Functionally, produces ATP from ADP in the presence of a proton gradient across the membrane. This Mycolicibacterium smegmatis (strain ATCC 700084 / mc(2)155) (Mycobacterium smegmatis) protein is ATP synthase epsilon chain.